The following is a 661-amino-acid chain: UvrABC system protein B (661 aa).

A Helicase ATP-binding domain is found at 25–414 (AGLNSKKRSQ…DTVVELIIRP (390 aa)). 38-45 (GITGSGKT) lines the ATP pocket. Positions 91-114 (YYDYYQPEAYIARTDTFIEKDSSI) match the Beta-hairpin motif. The Helicase C-terminal domain maps to 430-592 (QVEDLIGEIQ…IIPKTINRAI (163 aa)). Residues 621–656 (KAHIEKLKKDMLKAASNLEFEQAAKLRDQLKTLEEA) form the UVR domain.

This sequence belongs to the UvrB family. In terms of assembly, forms a heterotetramer with UvrA during the search for lesions. Interacts with UvrC in an incision complex.

The protein resides in the cytoplasm. Functionally, the UvrABC repair system catalyzes the recognition and processing of DNA lesions. A damage recognition complex composed of 2 UvrA and 2 UvrB subunits scans DNA for abnormalities. Upon binding of the UvrA(2)B(2) complex to a putative damaged site, the DNA wraps around one UvrB monomer. DNA wrap is dependent on ATP binding by UvrB and probably causes local melting of the DNA helix, facilitating insertion of UvrB beta-hairpin between the DNA strands. Then UvrB probes one DNA strand for the presence of a lesion. If a lesion is found the UvrA subunits dissociate and the UvrB-DNA preincision complex is formed. This complex is subsequently bound by UvrC and the second UvrB is released. If no lesion is found, the DNA wraps around the other UvrB subunit that will check the other stand for damage. The sequence is that of UvrABC system protein B from Rickettsia felis (strain ATCC VR-1525 / URRWXCal2) (Rickettsia azadi).